The following is a 379-amino-acid chain: MEDAHHHHWTMVERRGTQLWASGRPFIIHGFNTYWLMSFAADQATRLRVTAAIAEAGLNVCCTWAFSDGGYRALQTAPFHYDEDVFRALDFVVSEARRHNMRLILSLCNNWEDYGGKAQYVRWGKEAGLDLTSEDDFFSDPTIKSYYKAFVEAVVTRINTVTNETYKDDPTILAWELINEPRCPSDPSGDTLQAWMEEMASYVKSIDPVHLLEIGIEGFYGPSIPELLPVNPDEYSGHAGIDFIRNHQAPGIDLASIHVYSDIWLPQSIKENHLQFVDKWMQQHIDDAANLLGMPIVVGEFGVSVKDGKFGNEFREDFMKTIYRIFLSSWKEGVIGGGCLLWQLFPEGAEHMDDGYAVIFAKSPSTLSLLANHLRCLEC.

Residues W64 and N179 each coordinate substrate. Catalysis depends on E180, which acts as the Proton donor. A substrate-binding site is contributed by Y260. Residue E300 is the Nucleophile of the active site. A substrate-binding site is contributed by W342.

The protein belongs to the glycosyl hydrolase 5 (cellulase A) family. Expression not detected.

The catalysed reaction is Random hydrolysis of (1-&gt;4)-beta-D-mannosidic linkages in mannans, galactomannans and glucomannans.. The polypeptide is Mannan endo-1,4-beta-mannosidase 7 (MAN7) (Oryza sativa subsp. japonica (Rice)).